Consider the following 126-residue polypeptide: Large ribosomal subunit protein uL22 (126 aa).

This sequence belongs to the universal ribosomal protein uL22 family. In terms of assembly, part of the 50S ribosomal subunit.

Functionally, this protein binds specifically to 23S rRNA; its binding is stimulated by other ribosomal proteins, e.g. L4, L17, and L20. It is important during the early stages of 50S assembly. It makes multiple contacts with different domains of the 23S rRNA in the assembled 50S subunit and ribosome. Its function is as follows. The globular domain of the protein is located near the polypeptide exit tunnel on the outside of the subunit, while an extended beta-hairpin is found that lines the wall of the exit tunnel in the center of the 70S ribosome. This Cereibacter sphaeroides (strain ATCC 17029 / ATH 2.4.9) (Rhodobacter sphaeroides) protein is Large ribosomal subunit protein uL22.